A 99-amino-acid polypeptide reads, in one-letter code: Cystatin (99 aa).

One can recognise a Cystatin domain in the interval 3-99 (GGLSPRSVSD…EEKLCGFQVW (97 aa)). The Secondary area of contact motif lies at 47-51 (QSVAG). The cysteines at positions 65 and 81 are disulfide-linked.

The protein belongs to the cystatin family. Expressed by the venom gland.

The protein localises to the secreted. Functionally, inhibits various C1 cysteine proteases including cathepsin L (Ki is 0.1 nM), papain (Ki is 0.19 nM), cathepsin S (Ki is 1.2 nM), and cathepsin B (Ki is 2.5 nM). This protein has no toxic activity and its function in the venom is unknown. It may play a role as housekeeping or regulatory protein. This Naja atra (Chinese cobra) protein is Cystatin.